The chain runs to 687 residues: MSGPSDYQPSNPALQWIERRLPILGLMHSSFVAYPTPRNLNYWWTFGAILSFMLGMQILTGVILAMHYTPHADLAFKSVELIVRDVNYGWLLRNMHACGASMFFFAVYVHMLRGLYYGSYKEPREVLWILGVIIYLLMMATGFMGYVLPWGQMSFWGATVITNLFSAIPYFGESIVTLLWGGYSVGNPTLNRFFSLHYLLPFLIAGVVVLHVWALHVAGQNNPEGVEPKSEKDTVPFTPHATIKDMFGVACFLLLYAWFIFYMPNYLGDADNYIPANPGVTPPHIVPEWYYLPFYAILRSIPNKLAGVIGMFSAIIILCFLPWLDAAKTRSSKYRPLAKQFFWIFVAVCILLGYLGAQPPEGIYVIAGRVLTVCYFAYFLIVLPLLSRIETPRPVPNSISEAILAKGGKAVASVAIALVAAGALFLGSLQDARANEGSDKPPGNKWSFAGPFGKFDRGALQRGLKVYKEVCASCHGLSYIAFRNLAEAGGPSYSVAQVAAFASDYKIKDGPNDAGDMFERPGRPADYFPSPFPNEQAARAANGGAAPPDLSLITKARSYGRGFPWFIFDFFTQYQEQGPDYVSAVLQGFEEKVPEGVTIPEGSYYNKYFPGHAIKMPKPLSDGQVTYDDGSPATVAQYSKDVTTFLMWTAEPHMEARKRLGFQVFVFLIIFAGLMYFTKKKVWADSH.

A helical transmembrane segment spans residues 46–66 (FGAILSFMLGMQILTGVILAM). Heme b contacts are provided by His-96 and His-110. 2 helical membrane-spanning segments follow: residues 126–146 (VLWI…FMGY) and 160–180 (VITN…TLLW). 2 residues coordinate heme b: His-197 and His-211. 6 consecutive transmembrane segments (helical) span residues 199–219 (LLPF…HVAG), 247–267 (FGVA…PNYL), 305–325 (LAGV…PWLD), 337–357 (LAKQ…YLGA), 363–383 (IYVI…LIVL), and 410–430 (AVAS…GSLQ). An internal signal sequence region spans residues 404-434 (LAKGGKAVASVAIALVAAGALFLGSLQDARA). The Cytochrome c domain occupies 458–643 (GALQRGLKVY…TVAQYSKDVT (186 aa)). Positions 471, 474, 475, and 616 each coordinate heme c. Residues 666 to 678 (VFLIIFAGLMYFT) form a helical membrane-spanning segment.

Belongs to the cytochrome b family. As to quaternary structure, the main subunits of complex b-c1 are: cytochrome b, cytochrome c1 and the Rieske protein. Heme b is required as a cofactor. Requires heme c as cofactor. Post-translationally, the protein is post-translationally processed into cytochrome b and c1. This occurs by processing between residues 434 and 435 without processing between cytochrome b and the N-terminal of the putative signal sequence domain.

Its subcellular location is the cell inner membrane. In terms of biological role, component of the ubiquinol-cytochrome c reductase complex (complex III or cytochrome b-c1 complex), which is a respiratory chain that generates an electrochemical potential coupled to ATP synthesis. c1 functions as an electron donor to cytochrome c. The sequence is that of Cytochrome b/c1 (fbcH) from Bradyrhizobium diazoefficiens (strain JCM 10833 / BCRC 13528 / IAM 13628 / NBRC 14792 / USDA 110).